The chain runs to 139 residues: Plastocyanin (139 aa).

The first 34 residues, 1–34 (MKLIAASLRRLSLAVLTVLLVVSSFAVFTPSAAA), serve as a signal peptide directing secretion. One can recognise a Plastocyanin-like domain in the interval 35–135 (ETYTVKLGSD…HRGAGMVGKI (101 aa)). Cu cation is bound by residues H73, C123, H126, and M131.

It belongs to the plastocyanin family. Cu(2+) is required as a cofactor.

Its subcellular location is the cellular thylakoid membrane. Participates in electron transfer between P700 and the cytochrome b6-f complex in photosystem I. In Trichormus variabilis (strain ATCC 29413 / PCC 7937) (Anabaena variabilis), this protein is Plastocyanin (petE).